The primary structure comprises 183 residues: Small ribosomal subunit protein uS5 (183 aa).

An S5 DRBM domain is found at 11–71 (FLERVVGINR…EEAKKSFFRV (61 aa)).

Belongs to the universal ribosomal protein uS5 family. In terms of assembly, part of the 30S ribosomal subunit. Contacts proteins S4 and S8.

In terms of biological role, with S4 and S12 plays an important role in translational accuracy. Functionally, located at the back of the 30S subunit body where it stabilizes the conformation of the head with respect to the body. The polypeptide is Small ribosomal subunit protein uS5 (Micrococcus luteus (Micrococcus lysodeikticus)).